The following is a 262-amino-acid chain: Tetratricopeptide repeat protein 33 (262 aa).

Residues 17–63 are disordered; it reads ATSQQFEAEAADEKDAAENEDGNWLQASKRRKETLQEGCKQRSQQLK. TPR repeat units lie at residues 59-92, 93-126, and 127-160; these read SQQL…TPGD, ATLY…NPHS, and WEAW…YPMN. At Ser197 the chain carries Phosphoserine.

This chain is Tetratricopeptide repeat protein 33 (Ttc33), found in Mus musculus (Mouse).